The following is a 183-amino-acid chain: Putative 3-methyladenine DNA glycosylase (183 aa).

Belongs to the DNA glycosylase MPG family.

The protein is Putative 3-methyladenine DNA glycosylase of Legionella pneumophila subsp. pneumophila (strain Philadelphia 1 / ATCC 33152 / DSM 7513).